The sequence spans 20 residues: Fibrinogen beta chain (20 aa).

Tyrosine 5 bears the Sulfotyrosine mark.

As to quaternary structure, heterohexamer; disulfide linked. Contains 2 sets of 3 non-identical chains (alpha, beta and gamma). The 2 heterotrimers are in head to head conformation with the N-termini in a small central domain. Post-translationally, conversion of fibrinogen to fibrin is triggered by thrombin, which cleaves fibrinopeptides A and B from alpha and beta chains, and thus exposes the N-terminal polymerization sites responsible for the formation of the soft clot.

It is found in the secreted. In terms of biological role, cleaved by the protease thrombin to yield monomers which, together with fibrinogen alpha (FGA) and fibrinogen gamma (FGG), polymerize to form an insoluble fibrin matrix. Fibrin has a major function in hemostasis as one of the primary components of blood clots. In addition, functions during the early stages of wound repair to stabilize the lesion and guide cell migration during re-epithelialization. Was originally thought to be essential for platelet aggregation, based on in vitro studies using anticoagulated blood. However subsequent studies have shown that it is not absolutely required for thrombus formation in vivo. Enhances expression of SELP in activated platelets. Maternal fibrinogen is essential for successful pregnancy. Fibrin deposition is also associated with infection, where it protects against IFNG-mediated hemorrhage. May also facilitate the antibacterial immune response via both innate and T-cell mediated pathways. In Capra hircus (Goat), this protein is Fibrinogen beta chain (FGB).